Reading from the N-terminus, the 796-residue chain is Histone acetyltransferase KAT2B (796 aa).

3 disordered regions span residues 1–32 (MSESTGIPQGSPAVGAAGSAPAAPGVGGTECS), 77–97 (WKSQNPPPTPPPPTPPRAEQP), and 371–408 (AGGGSVSPARKTASVLEPNPGGEKRKPAEPLSHEDSKR). Residues 10 to 24 (GSPAVGAAGSAPAAP) show a composition bias toward low complexity. Over residues 81-94 (NPPPTPPPPTPPRA) the composition is skewed to pro residues. Residues 392–408 (GEKRKPAEPLSHEDSKR) show a composition bias toward basic and acidic residues. One can recognise an N-acetyltransferase domain in the interval 469 to 617 (LNQKPNKKIL…GATLMGCELN (149 aa)). The active-site Proton donor/acceptor is E536. Acetyl-CoA contacts are provided by residues 540–542 (CAV), 547–553 (QVKGYGT), and 578–581 (YAIG). Residues 687-791 (KDPDQLYSTL…KFFYTKIKEA (105 aa)) enclose the Bromo domain.

It belongs to the acetyltransferase family. GCN5 subfamily.

It is found in the nucleus. Its subcellular location is the cytoplasm. It localises to the cytoskeleton. The protein localises to the microtubule organizing center. The protein resides in the centrosome. The catalysed reaction is L-lysyl-[histone] + acetyl-CoA = N(6)-acetyl-L-lysyl-[histone] + CoA + H(+). It carries out the reaction L-lysyl-[protein] + acetyl-CoA = N(6)-acetyl-L-lysyl-[protein] + CoA + H(+). It catalyses the reaction spermidine + acetyl-CoA = N(8)-acetylspermidine + CoA + H(+). Functionally, functions as a histone acetyltransferase (HAT) to promote transcriptional activation. Has significant histone acetyltransferase activity with core histones (H3 and H4), and also with nucleosome core particles. Has a a strong preference for acetylation of H3 at 'Lys-9' (H3K9ac). Also acetylates non-histone proteins. Involved in heart and limb development by mediating acetylation of tbx5. Also acetylates spermidine. Together with kat2a, required for growth and differentiation of craniofacial cartilage and bone by regulating acetylation of histone H3 at 'Lys-9' (H3K9ac). In Danio rerio (Zebrafish), this protein is Histone acetyltransferase KAT2B.